A 749-amino-acid chain; its full sequence is Homeobox-leucine zipper protein ROC7 (749 aa).

The tract at residues 26–98 is disordered; sequence LDQHQQHQHQ…KKRYHRHTQH (73 aa). Residues 46–57 are compositionally biased toward basic and acidic residues; that stretch reads SDGRAPRDELEM. Over residues 68 to 78 the composition is skewed to gly residues; sequence SGGGGGGGGSG. The segment covering 86–97 has biased composition (basic residues); that stretch reads RPRKKRYHRHTQ. The homeobox DNA-binding region spans 88–147; it reads RKKRYHRHTQHQIQELEAFFKECPHPDDKQRKELSRELGLEPLQVKFWFQNKRTQMKTQH. Residues 137 to 218 adopt a coiled-coil conformation; sequence QNKRTQMKTQ…DRISAIAAKY (82 aa). Residues 256 to 494 enclose the START domain; sequence ADFDKPLVIE…LERQCERLAS (239 aa).

It belongs to the HD-ZIP homeobox family. Class IV subfamily.

The protein resides in the nucleus. Its function is as follows. Probable transcription factor. The protein is Homeobox-leucine zipper protein ROC7 (ROC7) of Oryza sativa subsp. indica (Rice).